Reading from the N-terminus, the 563-residue chain is Coiled-coil domain-containing protein 38 (563 aa).

Coiled-coil stretches lie at residues 129–212, 384–415, and 485–522; these read KRNT…KTEF, NIEFLLEQEEMLKANCVREEEKAAELQLRSRL, and ERMKQKERRQKFRDEKMREKQRHQEERLKAALEKAVAQ. The interval 521 to 550 is disordered; that stretch reads AQPKKKLGRRLVYHSKPPSANKQQLPLVNE. Over residues 523–533 the composition is skewed to basic residues; that stretch reads PKKKLGRRLVY.

As to quaternary structure, interacts with CCDC42, CFAP53, IFT88 and ODF2. Interacts with CCDC146. Interacts with TEKT3. Interacts with ubiquitinated histone H2A.

The protein resides in the cytoplasm. The protein localises to the cytoskeleton. It localises to the microtubule organizing center. Its subcellular location is the centrosome. It is found in the perinuclear region. The protein resides in the cell projection. The protein localises to the cilium. It localises to the flagellum. Essential for male fertility. Required for sperm flagellum biogenesis. Also required for acrosome biogenesis. Required for the attachment of developing acrosomes to the nucleus during spermiogenesis and may be involved in the transport of fibrous sheath components. The protein is Coiled-coil domain-containing protein 38 (CCDC38) of Macaca fascicularis (Crab-eating macaque).